Here is a 409-residue protein sequence, read N- to C-terminus: Failed axon connections homolog (409 aa).

Residues tyrosine 68–isoleucine 88 traverse the membrane as a helical segment. The tract at residues aspartate 372–lysine 409 is disordered.

This sequence belongs to the FAX family.

Its subcellular location is the membrane. May play a role in axonal development. The sequence is that of Failed axon connections homolog (FAXC) from Homo sapiens (Human).